The following is a 384-amino-acid chain: Kinesin-like protein KIF25 (384 aa).

Residues 1–20 (MTWTSGQLQREKQARPGSGA) form a disordered region. One can recognise a Kinesin motor domain in the interval 7 to 363 (QLQREKQARP…LGFGIRARQV (357 aa)). 65–72 (GQTGSGKS) provides a ligand contact to ATP. 2 disordered regions span residues 217-256 (DQACSATLPREQTEAGRAGRSRRASQGALAPQLVPGNPAG) and 362-384 (QVQRGPARKKPPSSQTEGKRRPD).

This sequence belongs to the TRAFAC class myosin-kinesin ATPase superfamily. Kinesin family. Homotetramer.

Its subcellular location is the cytoplasm. The protein resides in the cytoskeleton. The protein localises to the microtubule organizing center. It is found in the centrosome. Minus-end microtubule-dependent motor protein. Acts as a negative regulator of centrosome separation required to prevent premature centrosome separation during interphase. Required to maintain a centered nucleus to ensure that the spindle is stably oriented at the onset of mitosis. May also act as a negative regulator of amino acid starvation-induced autophagy. This is Kinesin-like protein KIF25 from Homo sapiens (Human).